A 548-amino-acid polypeptide reads, in one-letter code: T-complex protein 1 subunit theta (548 aa).

N-acetylalanine is present on alanine 2. Residue serine 23 is modified to Phosphoserine. Residue tyrosine 30 is modified to Phosphotyrosine. 2 residues coordinate ADP: tyrosine 47 and glycine 48. Aspartate 99 lines the Mg(2+) pocket. Positions 100, 101, 102, and 103 each coordinate ADP. Glycine 100, threonine 101, and asparagine 102 together coordinate ATP. The residue at position 162 (serine 162) is a Phosphoserine. 3 residues coordinate ADP: methionine 169, serine 170, and lysine 171. ATP-binding residues include serine 170 and lysine 171. Glycyl lysine isopeptide (Lys-Gly) (interchain with G-Cter in SUMO2) cross-links involve residues lysine 224, lysine 254, and lysine 260. Residues serine 269 and serine 317 each carry the phosphoserine modification. N6-acetyllysine occurs at positions 318 and 400. An ADP-binding site is contributed by glycine 412. ATP is bound at residue glycine 412. Residue lysine 459 forms a Glycyl lysine isopeptide (Lys-Gly) (interchain with G-Cter in SUMO1) linkage. An N6-acetyllysine modification is found at lysine 466. Position 499 (aspartate 499) interacts with ADP. ATP is bound by residues aspartate 499 and lysine 504. Tyrosine 505 bears the Phosphotyrosine mark. Residues 529-548 (PAGGPKPPSGKKDWDEDQND) are disordered. Lysine 534 is covalently cross-linked (Glycyl lysine isopeptide (Lys-Gly) (interchain with G-Cter in SUMO2)). At serine 537 the chain carries Phosphoserine. A Glycyl lysine isopeptide (Lys-Gly) (interchain with G-Cter in SUMO2) cross-link involves residue lysine 539.

Belongs to the TCP-1 chaperonin family. In terms of assembly, component of the chaperonin-containing T-complex (TRiC), a hexadecamer composed of two identical back-to-back stacked rings enclosing a protein folding chamber. Each ring is made up of eight different subunits: TCP1/CCT1, CCT2, CCT3, CCT4, CCT5, CCT6A/CCT6, CCT7, CCT8. Interacts with PACRG. Interacts with DNAAF4. Interacts with synaptic plasticity regulator PANTS.

The protein localises to the cytoplasm. The protein resides in the cytoskeleton. It is found in the microtubule organizing center. Its subcellular location is the centrosome. It localises to the cilium basal body. The catalysed reaction is ATP + H2O = ADP + phosphate + H(+). In terms of biological role, component of the chaperonin-containing T-complex (TRiC), a molecular chaperone complex that assists the folding of actin, tubulin and other proteins upon ATP hydrolysis. The TRiC complex mediates the folding of WRAP53/TCAB1, thereby regulating telomere maintenance. As part of the TRiC complex may play a role in the assembly of BBSome, a complex involved in ciliogenesis regulating transports vesicles to the cilia. This is T-complex protein 1 subunit theta (CCT8) from Bos taurus (Bovine).